Here is a 302-residue protein sequence, read N- to C-terminus: Putative receptor-like protein 16 (302 aa).

LRR repeat units follow at residues 1–19 (MNLT…LGNM), 20–43 (EMIE…FLKG), and 45–70 (DSLI…NFFS). The LRR 4; degenerate repeat unit spans residues 72 to 91 (LELSMDNNLFTGKIGRGLQS). 7 LRR repeats span residues 92–115 (LRSL…WFDQ), 116–140 (LQDL…LFNM), 142–164 (SLQL…ISGY), 166–188 (ALKV…LLGK), 190–211 (IIVL…INTQ), 213–234 (IRIL…LCAV), and 235–258 (RSIH…LRNA).

It belongs to the RLP family.

The chain is Putative receptor-like protein 16 from Arabidopsis thaliana (Mouse-ear cress).